The primary structure comprises 393 residues: S-adenosylmethionine synthase 3 (393 aa).

Position 9 (Glu9) interacts with Mg(2+). His15 is an ATP binding site. Position 43 (Glu43) interacts with K(+). 2 residues coordinate L-methionine: Glu56 and Gln99. ATP is bound by residues 167–169 (DGK), 235–238 (SGRF), Asp246, 252–253 (RK), Ala269, Lys273, and Lys277. Asp246 is an L-methionine binding site. Lys277 contributes to the L-methionine binding site.

The protein belongs to the AdoMet synthase family. Homotetramer. The cofactor is Mn(2+). Mg(2+) is required as a cofactor. It depends on Co(2+) as a cofactor. Requires K(+) as cofactor.

It localises to the cytoplasm. It carries out the reaction L-methionine + ATP + H2O = S-adenosyl-L-methionine + phosphate + diphosphate. It functions in the pathway amino-acid biosynthesis; S-adenosyl-L-methionine biosynthesis; S-adenosyl-L-methionine from L-methionine: step 1/1. In terms of biological role, catalyzes the formation of S-adenosylmethionine from methionine and ATP. The reaction comprises two steps that are both catalyzed by the same enzyme: formation of S-adenosylmethionine (AdoMet) and triphosphate, and subsequent hydrolysis of the triphosphate. This Petunia hybrida (Petunia) protein is S-adenosylmethionine synthase 3 (SAM3).